Here is a 285-residue protein sequence, read N- to C-terminus: Phosphatidylserine decarboxylase proenzyme (285 aa).

Catalysis depends on charge relay system; for autoendoproteolytic cleavage activity residues D96, H152, and S250. The active-site Schiff-base intermediate with substrate; via pyruvic acid; for decarboxylase activity is the S250. S250 is modified (pyruvic acid (Ser); by autocatalysis).

The protein belongs to the phosphatidylserine decarboxylase family. PSD-B subfamily. Prokaryotic type I sub-subfamily. Heterodimer of a large membrane-associated beta subunit and a small pyruvoyl-containing alpha subunit. Pyruvate is required as a cofactor. Post-translationally, is synthesized initially as an inactive proenzyme. Formation of the active enzyme involves a self-maturation process in which the active site pyruvoyl group is generated from an internal serine residue via an autocatalytic post-translational modification. Two non-identical subunits are generated from the proenzyme in this reaction, and the pyruvate is formed at the N-terminus of the alpha chain, which is derived from the carboxyl end of the proenzyme. The autoendoproteolytic cleavage occurs by a canonical serine protease mechanism, in which the side chain hydroxyl group of the serine supplies its oxygen atom to form the C-terminus of the beta chain, while the remainder of the serine residue undergoes an oxidative deamination to produce ammonia and the pyruvoyl prosthetic group on the alpha chain. During this reaction, the Ser that is part of the protease active site of the proenzyme becomes the pyruvoyl prosthetic group, which constitutes an essential element of the active site of the mature decarboxylase.

It is found in the cell membrane. It carries out the reaction a 1,2-diacyl-sn-glycero-3-phospho-L-serine + H(+) = a 1,2-diacyl-sn-glycero-3-phosphoethanolamine + CO2. It functions in the pathway phospholipid metabolism; phosphatidylethanolamine biosynthesis; phosphatidylethanolamine from CDP-diacylglycerol: step 2/2. Functionally, catalyzes the formation of phosphatidylethanolamine (PtdEtn) from phosphatidylserine (PtdSer). In Acinetobacter baylyi (strain ATCC 33305 / BD413 / ADP1), this protein is Phosphatidylserine decarboxylase proenzyme.